The chain runs to 110 residues: UPF0060 membrane protein BTH_I2792 (110 aa).

The next 4 helical transmembrane spans lie at 9 to 29 (ALFV…WLVL), 34 to 54 (PVWL…LLTL), 64 to 84 (AAYG…VDGV), and 86 to 106 (LSRW…VIAL).

Belongs to the UPF0060 family.

The protein resides in the cell inner membrane. This is UPF0060 membrane protein BTH_I2792 from Burkholderia thailandensis (strain ATCC 700388 / DSM 13276 / CCUG 48851 / CIP 106301 / E264).